The sequence spans 160 residues: 2-C-methyl-D-erythritol 2,4-cyclodiphosphate synthase (160 aa).

2 residues coordinate a divalent metal cation: aspartate 11 and histidine 13. Residues 11 to 13 and 37 to 38 each bind 4-CDP-2-C-methyl-D-erythritol 2-phosphate; these read DIH and HS. Histidine 45 provides a ligand contact to a divalent metal cation. Residues 59-61, 135-138, and arginine 145 contribute to the 4-CDP-2-C-methyl-D-erythritol 2-phosphate site; these read DIG and TTNE.

Belongs to the IspF family. As to quaternary structure, homotrimer. A divalent metal cation serves as cofactor.

It catalyses the reaction 4-CDP-2-C-methyl-D-erythritol 2-phosphate = 2-C-methyl-D-erythritol 2,4-cyclic diphosphate + CMP. The protein operates within isoprenoid biosynthesis; isopentenyl diphosphate biosynthesis via DXP pathway; isopentenyl diphosphate from 1-deoxy-D-xylulose 5-phosphate: step 4/6. Functionally, involved in the biosynthesis of isopentenyl diphosphate (IPP) and dimethylallyl diphosphate (DMAPP), two major building blocks of isoprenoid compounds. Catalyzes the conversion of 4-diphosphocytidyl-2-C-methyl-D-erythritol 2-phosphate (CDP-ME2P) to 2-C-methyl-D-erythritol 2,4-cyclodiphosphate (ME-CPP) with a corresponding release of cytidine 5-monophosphate (CMP). The chain is 2-C-methyl-D-erythritol 2,4-cyclodiphosphate synthase from Synechococcus elongatus (strain ATCC 33912 / PCC 7942 / FACHB-805) (Anacystis nidulans R2).